A 382-amino-acid chain; its full sequence is UDP-4-amino-4-deoxy-L-arabinose--oxoglutarate aminotransferase (382 aa).

Lys183 bears the N6-(pyridoxal phosphate)lysine mark.

The protein belongs to the DegT/DnrJ/EryC1 family. ArnB subfamily. As to quaternary structure, homodimer. It depends on pyridoxal 5'-phosphate as a cofactor.

It carries out the reaction UDP-4-amino-4-deoxy-beta-L-arabinose + 2-oxoglutarate = UDP-beta-L-threo-pentopyranos-4-ulose + L-glutamate. It functions in the pathway nucleotide-sugar biosynthesis; UDP-4-deoxy-4-formamido-beta-L-arabinose biosynthesis; UDP-4-deoxy-4-formamido-beta-L-arabinose from UDP-alpha-D-glucuronate: step 2/3. It participates in bacterial outer membrane biogenesis; lipopolysaccharide biosynthesis. Functionally, catalyzes the conversion of UDP-4-keto-arabinose (UDP-Ara4O) to UDP-4-amino-4-deoxy-L-arabinose (UDP-L-Ara4N). The modified arabinose is attached to lipid A and is required for resistance to polymyxin and cationic antimicrobial peptides. The sequence is that of UDP-4-amino-4-deoxy-L-arabinose--oxoglutarate aminotransferase from Pseudomonas aeruginosa (strain LESB58).